A 305-amino-acid polypeptide reads, in one-letter code: UDP-3-O-acyl-N-acetylglucosamine deacetylase (305 aa).

Histidine 79, histidine 238, and aspartate 242 together coordinate Zn(2+). The active-site Proton donor is the histidine 265.

Belongs to the LpxC family. Zn(2+) serves as cofactor.

The catalysed reaction is a UDP-3-O-[(3R)-3-hydroxyacyl]-N-acetyl-alpha-D-glucosamine + H2O = a UDP-3-O-[(3R)-3-hydroxyacyl]-alpha-D-glucosamine + acetate. Its pathway is glycolipid biosynthesis; lipid IV(A) biosynthesis; lipid IV(A) from (3R)-3-hydroxytetradecanoyl-[acyl-carrier-protein] and UDP-N-acetyl-alpha-D-glucosamine: step 2/6. Functionally, catalyzes the hydrolysis of UDP-3-O-myristoyl-N-acetylglucosamine to form UDP-3-O-myristoylglucosamine and acetate, the committed step in lipid A biosynthesis. The sequence is that of UDP-3-O-acyl-N-acetylglucosamine deacetylase from Haemophilus influenzae (strain 86-028NP).